A 333-amino-acid chain; its full sequence is Nucleoid-associated protein YE1421 (333 aa).

The protein belongs to the YejK family.

It localises to the cytoplasm. It is found in the nucleoid. The protein is Nucleoid-associated protein YE1421 of Yersinia enterocolitica serotype O:8 / biotype 1B (strain NCTC 13174 / 8081).